The following is a 494-amino-acid chain: Aspartyl/glutamyl-tRNA(Asn/Gln) amidotransferase subunit B (494 aa).

Belongs to the GatB/GatE family. GatB subfamily. Heterotrimer of A, B and C subunits.

It catalyses the reaction L-glutamyl-tRNA(Gln) + L-glutamine + ATP + H2O = L-glutaminyl-tRNA(Gln) + L-glutamate + ADP + phosphate + H(+). It carries out the reaction L-aspartyl-tRNA(Asn) + L-glutamine + ATP + H2O = L-asparaginyl-tRNA(Asn) + L-glutamate + ADP + phosphate + 2 H(+). Allows the formation of correctly charged Asn-tRNA(Asn) or Gln-tRNA(Gln) through the transamidation of misacylated Asp-tRNA(Asn) or Glu-tRNA(Gln) in organisms which lack either or both of asparaginyl-tRNA or glutaminyl-tRNA synthetases. The reaction takes place in the presence of glutamine and ATP through an activated phospho-Asp-tRNA(Asn) or phospho-Glu-tRNA(Gln). In Nitrobacter winogradskyi (strain ATCC 25391 / DSM 10237 / CIP 104748 / NCIMB 11846 / Nb-255), this protein is Aspartyl/glutamyl-tRNA(Asn/Gln) amidotransferase subunit B.